The primary structure comprises 501 residues: ATP synthase subunit alpha (501 aa).

169 to 176 (GDRQTGKT) contributes to the ATP binding site.

This sequence belongs to the ATPase alpha/beta chains family. F-type ATPases have 2 components, CF(1) - the catalytic core - and CF(0) - the membrane proton channel. CF(1) has five subunits: alpha(3), beta(3), gamma(1), delta(1), epsilon(1). CF(0) has three main subunits: a(1), b(2) and c(9-12). The alpha and beta chains form an alternating ring which encloses part of the gamma chain. CF(1) is attached to CF(0) by a central stalk formed by the gamma and epsilon chains, while a peripheral stalk is formed by the delta and b chains.

The protein localises to the cell membrane. The enzyme catalyses ATP + H2O + 4 H(+)(in) = ADP + phosphate + 5 H(+)(out). Functionally, produces ATP from ADP in the presence of a proton gradient across the membrane. The alpha chain is a regulatory subunit. The polypeptide is ATP synthase subunit alpha (Streptococcus pneumoniae serotype 4 (strain ATCC BAA-334 / TIGR4)).